A 228-amino-acid chain; its full sequence is Ribulose-phosphate 3-epimerase (228 aa).

Serine 9 lines the substrate pocket. Positions 34, 36, 68, and 177 each coordinate a divalent metal cation. Aspartate 36 (proton acceptor) is an active-site residue. Substrate-binding positions include histidine 68, 177 to 179 (DGG), and 199 to 200 (GS). Aspartate 177 serves as the catalytic Proton donor.

It belongs to the ribulose-phosphate 3-epimerase family. A divalent metal cation serves as cofactor.

It carries out the reaction D-ribulose 5-phosphate = D-xylulose 5-phosphate. It functions in the pathway carbohydrate degradation. Functionally, catalyzes the reversible epimerization of D-ribulose 5-phosphate to D-xylulose 5-phosphate. The sequence is that of Ribulose-phosphate 3-epimerase from Buchnera aphidicola subsp. Acyrthosiphon pisum (strain APS) (Acyrthosiphon pisum symbiotic bacterium).